The following is a 469-amino-acid chain: UDP-N-acetylmuramoylalanine--D-glutamate ligase (469 aa).

123-129 (GTNGKST) is an ATP binding site.

It belongs to the MurCDEF family.

The protein localises to the cytoplasm. The catalysed reaction is UDP-N-acetyl-alpha-D-muramoyl-L-alanine + D-glutamate + ATP = UDP-N-acetyl-alpha-D-muramoyl-L-alanyl-D-glutamate + ADP + phosphate + H(+). The protein operates within cell wall biogenesis; peptidoglycan biosynthesis. In terms of biological role, cell wall formation. Catalyzes the addition of glutamate to the nucleotide precursor UDP-N-acetylmuramoyl-L-alanine (UMA). In Caulobacter sp. (strain K31), this protein is UDP-N-acetylmuramoylalanine--D-glutamate ligase.